A 241-amino-acid chain; its full sequence is Small ribosomal subunit protein uS2 (241 aa).

This sequence belongs to the universal ribosomal protein uS2 family.

The protein is Small ribosomal subunit protein uS2 of Pectobacterium carotovorum subsp. carotovorum (strain PC1).